The primary structure comprises 153 residues: Large ribosomal subunit protein uL15 (153 aa).

The interval 1 to 49 is disordered; sequence MQLHNLYPFPEERKTRRRVGRGSGSGLGCTAGKGHKGQNARAGGGVAPG. Residues 21 to 31 show a composition bias toward gly residues; sequence RGSGSGLGCTA.

This sequence belongs to the universal ribosomal protein uL15 family. In terms of assembly, part of the 50S ribosomal subunit.

Its function is as follows. Binds to the 23S rRNA. The sequence is that of Large ribosomal subunit protein uL15 from Desulfovibrio desulfuricans (strain ATCC 27774 / DSM 6949 / MB).